Here is a 209-residue protein sequence, read N- to C-terminus: Large ribosomal subunit protein uL3 (209 aa).

Belongs to the universal ribosomal protein uL3 family. As to quaternary structure, part of the 50S ribosomal subunit. Forms a cluster with proteins L14 and L19.

One of the primary rRNA binding proteins, it binds directly near the 3'-end of the 23S rRNA, where it nucleates assembly of the 50S subunit. This is Large ribosomal subunit protein uL3 from Nitratidesulfovibrio vulgaris (strain ATCC 29579 / DSM 644 / CCUG 34227 / NCIMB 8303 / VKM B-1760 / Hildenborough) (Desulfovibrio vulgaris).